The chain runs to 355 residues: Uroporphyrinogen decarboxylase (355 aa).

Substrate is bound by residues 27–31, Asp78, Tyr155, Ser210, and His328; that span reads RQAGR.

The protein belongs to the uroporphyrinogen decarboxylase family. As to quaternary structure, homodimer.

The protein localises to the cytoplasm. It catalyses the reaction uroporphyrinogen III + 4 H(+) = coproporphyrinogen III + 4 CO2. Its pathway is porphyrin-containing compound metabolism; protoporphyrin-IX biosynthesis; coproporphyrinogen-III from 5-aminolevulinate: step 4/4. In terms of biological role, catalyzes the decarboxylation of four acetate groups of uroporphyrinogen-III to yield coproporphyrinogen-III. This is Uroporphyrinogen decarboxylase from Azotobacter vinelandii (strain DJ / ATCC BAA-1303).